The sequence spans 131 residues: Large ribosomal subunit protein bL21 (131 aa).

Belongs to the bacterial ribosomal protein bL21 family. Part of the 50S ribosomal subunit. Contacts protein L20.

In terms of biological role, this protein binds to 23S rRNA in the presence of protein L20. This is Large ribosomal subunit protein bL21 from Cereibacter sphaeroides (strain ATCC 17023 / DSM 158 / JCM 6121 / CCUG 31486 / LMG 2827 / NBRC 12203 / NCIMB 8253 / ATH 2.4.1.) (Rhodobacter sphaeroides).